The chain runs to 86 residues: Small ribosomal subunit protein uS17 (86 aa).

This sequence belongs to the universal ribosomal protein uS17 family. In terms of assembly, part of the 30S ribosomal subunit.

One of the primary rRNA binding proteins, it binds specifically to the 5'-end of 16S ribosomal RNA. The protein is Small ribosomal subunit protein uS17 of Halorhodospira halophila (strain DSM 244 / SL1) (Ectothiorhodospira halophila (strain DSM 244 / SL1)).